The chain runs to 151 residues: Small ribosomal subunit protein uS13 (151 aa).

It belongs to the universal ribosomal protein uS13 family. As to quaternary structure, part of the 30S ribosomal subunit. Forms a loose heterodimer with protein S19. Forms two bridges to the 50S subunit in the 70S ribosome.

Located at the top of the head of the 30S subunit, it contacts several helices of the 16S rRNA. In the 70S ribosome it contacts the 23S rRNA (bridge B1a) and protein L5 of the 50S subunit (bridge B1b), connecting the 2 subunits; these bridges are implicated in subunit movement. This chain is Small ribosomal subunit protein uS13, found in Hyperthermus butylicus (strain DSM 5456 / JCM 9403 / PLM1-5).